Consider the following 398-residue polypeptide: Elongation factor Tu (398 aa).

In terms of domain architecture, tr-type G spans lysine 10–glutamate 207. The segment at glycine 19–threonine 26 is G1. Residue glycine 19 to threonine 26 participates in GTP binding. Residue threonine 26 coordinates Mg(2+). Residues glycine 63–asparagine 67 are G2. The interval aspartate 84–glycine 87 is G3. Residues aspartate 84–histidine 88 and asparagine 139–aspartate 142 contribute to the GTP site. A G4 region spans residues asparagine 139–aspartate 142. Positions serine 177 to leucine 179 are G5.

This sequence belongs to the TRAFAC class translation factor GTPase superfamily. Classic translation factor GTPase family. EF-Tu/EF-1A subfamily. As to quaternary structure, monomer.

It is found in the cytoplasm. It carries out the reaction GTP + H2O = GDP + phosphate + H(+). Functionally, GTP hydrolase that promotes the GTP-dependent binding of aminoacyl-tRNA to the A-site of ribosomes during protein biosynthesis. The polypeptide is Elongation factor Tu (Streptococcus pneumoniae serotype 4 (strain ATCC BAA-334 / TIGR4)).